The chain runs to 128 residues: Small ribosomal subunit protein eS8 (128 aa).

This sequence belongs to the eukaryotic ribosomal protein eS8 family. In terms of assembly, part of the 30S ribosomal subunit.

The sequence is that of Small ribosomal subunit protein eS8 from Methanococcus aeolicus (strain ATCC BAA-1280 / DSM 17508 / OCM 812 / Nankai-3).